The following is a 63-amino-acid chain: Conotoxin p5a (63 aa).

The N-terminal stretch at 1–19 (MRCLPVFVILLLLIPSAPC) is a signal peptide. Residues 20–50 (VDAHPKTKDDMPLASFHDNAKGTLQRFWKKR) constitute a propeptide that is removed on maturation. Disulfide bonds link Cys-52–Cys-59 and Cys-53–Cys-60. Position 62 is a leucine amide (Leu-62).

As to expression, expressed by the venom duct.

It localises to the secreted. Functionally, in vivo, low levels of the peptide injected into male specimens of the Siamese fighting fish causes an immediate aggressive display in this fish in response to their reflection when placed in a mirrored aquarium; High levels of the peptide suppressed this behavior. No effect is observed when injected into mice. This Conus purpurascens (Purple cone) protein is Conotoxin p5a.